A 156-amino-acid polypeptide reads, in one-letter code: Type II secretion system core protein G (156 aa).

The propeptide at methionine 1–glycine 22 is leader sequence. At phenylalanine 23 the chain carries N-methylphenylalanine. Residues phenylalanine 23–valine 43 traverse the membrane as a helical segment.

Belongs to the GSP G family. As to quaternary structure, type II secretion system is composed of four main components: the outer membrane complex, the inner membrane complex, the cytoplasmic secretion ATPase and the periplasm-spanning pseudopilus. Forms homomultimers. Cleaved by the prepilin peptidase. Post-translationally, methylated by prepilin peptidase at the amino group of the N-terminal phenylalanine once the leader sequence is cleaved.

The protein localises to the cell inner membrane. Its function is as follows. Core component of the type II secretion system required for the energy-dependent secretion of extracellular factors such as proteases and toxins from the periplasm. Pseudopilin (pilin-like) protein that polymerizes to form the pseudopilus. Further polymerization triggers pseudopilus growth. The sequence is that of Type II secretion system core protein G (outG) from Pectobacterium carotovorum subsp. carotovorum (Erwinia carotovora subsp. carotovora).